Here is a 698-residue protein sequence, read N- to C-terminus: Glycine--tRNA ligase beta subunit (698 aa).

The protein belongs to the class-II aminoacyl-tRNA synthetase family. As to quaternary structure, tetramer of two alpha and two beta subunits.

The protein localises to the cytoplasm. It carries out the reaction tRNA(Gly) + glycine + ATP = glycyl-tRNA(Gly) + AMP + diphosphate. This is Glycine--tRNA ligase beta subunit from Xanthomonas campestris pv. campestris (strain 8004).